Here is a 119-residue protein sequence, read N- to C-terminus: Protein Wnt-4 (119 aa).

The O-palmitoleoyl serine; by PORCN moiety is linked to residue Ser-1. 2 disulfide bridges follow: Cys-69–Cys-100 and Cys-85–Cys-95. Asn-86 carries N-linked (GlcNAc...) asparagine glycosylation.

Belongs to the Wnt family. Palmitoleoylation is required for efficient binding to frizzled receptors. Depalmitoleoylation leads to Wnt signaling pathway inhibition.

The protein localises to the secreted. The protein resides in the extracellular space. It localises to the extracellular matrix. In terms of biological role, ligand for members of the frizzled family of seven transmembrane receptors. Plays an important role in embryonic development. This Sceloporus occidentalis (Western fence lizard) protein is Protein Wnt-4 (WNT-4).